A 221-amino-acid chain; its full sequence is MSTIDILSPSGDNAGTVELPAEIFDVEKISIPLLHQVVVAQLAAARQGTHKVKRRGEVRGGGKKPYRQKGTGRARQGSTRAPQFAGGGVVHGPTPRDYSQRTPKKMKAAALRHALTDRARNARIHVITGVIEGETPSTKAAKSFLGKVSERKNVLLVIERSDEAALLSARNLPQVHILEPGQLNTYDVLVSDDVVFTQAAFESFVSGAPQSSAADTEGSEA.

Residues 44-102 (AARQGTHKVKRRGEVRGGGKKPYRQKGTGRARQGSTRAPQFAGGGVVHGPTPRDYSQRT) form a disordered region. Over residues 61 to 72 (GGKKPYRQKGTG) the composition is skewed to basic residues.

The protein belongs to the universal ribosomal protein uL4 family. In terms of assembly, part of the 50S ribosomal subunit.

One of the primary rRNA binding proteins, this protein initially binds near the 5'-end of the 23S rRNA. It is important during the early stages of 50S assembly. It makes multiple contacts with different domains of the 23S rRNA in the assembled 50S subunit and ribosome. In terms of biological role, forms part of the polypeptide exit tunnel. The sequence is that of Large ribosomal subunit protein uL4 from Streptomyces avermitilis (strain ATCC 31267 / DSM 46492 / JCM 5070 / NBRC 14893 / NCIMB 12804 / NRRL 8165 / MA-4680).